The sequence spans 328 residues: Probable cell division protein WhiA (328 aa).

A DNA-binding region (H-T-H motif) is located at residues 276-309; sequence SLEELGRLADPQMTKDAVAGRIRRLLHMADKKAS.

The protein belongs to the WhiA family.

Functionally, involved in cell division and chromosome segregation. This Corynebacterium diphtheriae (strain ATCC 700971 / NCTC 13129 / Biotype gravis) protein is Probable cell division protein WhiA.